Consider the following 348-residue polypeptide: Isopentenyl-diphosphate delta-isomerase (348 aa).

9 to 10 (RK) lines the substrate pocket. FMN-binding positions include 68–70 (AMT), serine 98, and asparagine 127. Residue glutamine 157 participates in substrate binding. Position 158 (glutamate 158) interacts with Mg(2+). Residues lysine 188, serine 213, threonine 218, and 286 to 287 (AG) contribute to the FMN site.

This sequence belongs to the IPP isomerase type 2 family. As to quaternary structure, homooctamer. Dimer of tetramers. It depends on FMN as a cofactor. NADPH serves as cofactor. Mg(2+) is required as a cofactor.

It localises to the cytoplasm. The enzyme catalyses isopentenyl diphosphate = dimethylallyl diphosphate. Functionally, involved in the biosynthesis of isoprenoids. Catalyzes the 1,3-allylic rearrangement of the homoallylic substrate isopentenyl (IPP) to its allylic isomer, dimethylallyl diphosphate (DMAPP). This chain is Isopentenyl-diphosphate delta-isomerase, found in Limosilactobacillus reuteri (strain DSM 20016) (Lactobacillus reuteri).